We begin with the raw amino-acid sequence, 203 residues long: Guanylate kinase (203 aa).

A Guanylate kinase-like domain is found at 4–183; the sequence is GKLFVISAPS…ASTLLKSIIW (180 aa). Residue 11–18 coordinates ATP; sequence APSGAGKT.

This sequence belongs to the guanylate kinase family.

The protein localises to the cytoplasm. The enzyme catalyses GMP + ATP = GDP + ADP. Functionally, essential for recycling GMP and indirectly, cGMP. This Desulfotalea psychrophila (strain LSv54 / DSM 12343) protein is Guanylate kinase.